A 245-amino-acid polypeptide reads, in one-letter code: Adapter protein MecA (245 aa).

This sequence belongs to the MecA family. In terms of assembly, homodimer.

Enables the recognition and targeting of unfolded and aggregated proteins to the ClpC protease or to other proteins involved in proteolysis. The protein is Adapter protein MecA of Streptococcus pneumoniae serotype 4 (strain ATCC BAA-334 / TIGR4).